We begin with the raw amino-acid sequence, 159 residues long: 2-C-methyl-D-erythritol 2,4-cyclodiphosphate synthase (159 aa).

Residues D10 and H12 each coordinate a divalent metal cation. Residues 10-12 and 36-37 contribute to the 4-CDP-2-C-methyl-D-erythritol 2-phosphate site; these read DVH and HS. Residue H44 coordinates a divalent metal cation. Residues 58 to 60, 63 to 67, 102 to 108, 134 to 137, F141, and R144 contribute to the 4-CDP-2-C-methyl-D-erythritol 2-phosphate site; these read DIG, FPDTD, AQAPKMA, and TTTE.

The protein belongs to the IspF family. In terms of assembly, homotrimer. A divalent metal cation is required as a cofactor.

It carries out the reaction 4-CDP-2-C-methyl-D-erythritol 2-phosphate = 2-C-methyl-D-erythritol 2,4-cyclic diphosphate + CMP. The protein operates within isoprenoid biosynthesis; isopentenyl diphosphate biosynthesis via DXP pathway; isopentenyl diphosphate from 1-deoxy-D-xylulose 5-phosphate: step 4/6. Its function is as follows. Involved in the biosynthesis of isopentenyl diphosphate (IPP) and dimethylallyl diphosphate (DMAPP), two major building blocks of isoprenoid compounds. Catalyzes the conversion of 4-diphosphocytidyl-2-C-methyl-D-erythritol 2-phosphate (CDP-ME2P) to 2-C-methyl-D-erythritol 2,4-cyclodiphosphate (ME-CPP) with a corresponding release of cytidine 5-monophosphate (CMP). This chain is 2-C-methyl-D-erythritol 2,4-cyclodiphosphate synthase, found in Shewanella halifaxensis (strain HAW-EB4).